Consider the following 371-residue polypeptide: MIKIVGLVGWRGMVGSVLLKRMQEENDFSRIKPVFFSTSQFGQDGPIINNISYNILENAYNIDVLKEMDIIITCQGGSYTKEIYPTLRKNGWKGYWIDAASNLRMKNDSVIILDPVNYNVIEDSINKGIRTFVGGNCTISLMLMSLGGLFQTELVEWIAVSTYQAASGAGARHMIELLNQMGILYKSVETDLLKGSHSILSIEDKVTKISRSVNFPVKNFSVPLAASLIPWIDTEMSNGQSREEWKGQAETNKILGTKDTILIDGTCVRIGSLRCHSQSFVIKLKKDVSLEDIEEIIRNHNKWVDVIPNSIQDTLLKLTPSSVTGTLNIPIGRLRKLNMGKKYLSAFTVGDQLLWGAAEPLRRMLNILINI.

NADP(+) is bound by residues Arg-11 to Val-14, Thr-38 to Ser-39, and Gln-75. Arg-104 lines the phosphate pocket. Catalysis depends on Cys-137, which acts as the Acyl-thioester intermediate. Residue Gln-164 coordinates substrate. Ser-167–Gly-168 serves as a coordination point for NADP(+). Glu-243 is a substrate binding site. Lys-246 provides a ligand contact to phosphate. Arg-269 is a binding site for substrate. His-276 acts as the Proton acceptor in catalysis. Gln-352 lines the NADP(+) pocket.

The protein belongs to the aspartate-semialdehyde dehydrogenase family. In terms of assembly, homodimer.

It catalyses the reaction L-aspartate 4-semialdehyde + phosphate + NADP(+) = 4-phospho-L-aspartate + NADPH + H(+). It participates in amino-acid biosynthesis; L-lysine biosynthesis via DAP pathway; (S)-tetrahydrodipicolinate from L-aspartate: step 2/4. Its pathway is amino-acid biosynthesis; L-methionine biosynthesis via de novo pathway; L-homoserine from L-aspartate: step 2/3. The protein operates within amino-acid biosynthesis; L-threonine biosynthesis; L-threonine from L-aspartate: step 2/5. Its function is as follows. Catalyzes the NADPH-dependent formation of L-aspartate-semialdehyde (L-ASA) by the reductive dephosphorylation of L-aspartyl-4-phosphate. The chain is Aspartate-semialdehyde dehydrogenase from Buchnera aphidicola subsp. Acyrthosiphon pisum (strain APS) (Acyrthosiphon pisum symbiotic bacterium).